The primary structure comprises 300 residues: 4-hydroxy-tetrahydrodipicolinate synthase (300 aa).

Pyruvate is bound at residue Thr57. Tyr145 (proton donor/acceptor) is an active-site residue. Lys173 functions as the Schiff-base intermediate with substrate in the catalytic mechanism. Residue Ile213 coordinates pyruvate.

The protein belongs to the DapA family. Homotetramer; dimer of dimers.

It localises to the cytoplasm. It catalyses the reaction L-aspartate 4-semialdehyde + pyruvate = (2S,4S)-4-hydroxy-2,3,4,5-tetrahydrodipicolinate + H2O + H(+). It functions in the pathway amino-acid biosynthesis; L-lysine biosynthesis via DAP pathway; (S)-tetrahydrodipicolinate from L-aspartate: step 3/4. Its function is as follows. Catalyzes the condensation of (S)-aspartate-beta-semialdehyde [(S)-ASA] and pyruvate to 4-hydroxy-tetrahydrodipicolinate (HTPA). This Corynebacterium urealyticum (strain ATCC 43042 / DSM 7109) protein is 4-hydroxy-tetrahydrodipicolinate synthase.